A 425-amino-acid polypeptide reads, in one-letter code: Dihydroorotase (425 aa).

Zn(2+)-binding residues include histidine 58 and histidine 60. Residues histidine 60–arginine 62 and asparagine 92 each bind substrate. Zn(2+)-binding residues include aspartate 150, histidine 177, and histidine 230. Substrate is bound at residue asparagine 276. Zn(2+) is bound at residue aspartate 303. Residue aspartate 303 is part of the active site. Substrate-binding positions include histidine 307 and phenylalanine 321–glycine 322.

The protein belongs to the metallo-dependent hydrolases superfamily. DHOase family. Class I DHOase subfamily. The cofactor is Zn(2+).

It carries out the reaction (S)-dihydroorotate + H2O = N-carbamoyl-L-aspartate + H(+). It participates in pyrimidine metabolism; UMP biosynthesis via de novo pathway; (S)-dihydroorotate from bicarbonate: step 3/3. Its function is as follows. Catalyzes the reversible cyclization of carbamoyl aspartate to dihydroorotate. The polypeptide is Dihydroorotase (Pediococcus pentosaceus (strain ATCC 25745 / CCUG 21536 / LMG 10740 / 183-1w)).